The following is a 293-amino-acid chain: Polyamine aminopropyltransferase (293 aa).

Positions 10–244 (HIWFTEYHNN…GFWSFTLASK (235 aa)) constitute a PABS domain. Glutamine 39 contributes to the S-methyl-5'-thioadenosine binding site. Positions 70 and 94 each coordinate spermidine. S-methyl-5'-thioadenosine contacts are provided by residues glutamate 114 and 145 to 146 (DG). Aspartate 163 acts as the Proton acceptor in catalysis. Spermidine is bound at residue 163–166 (DCPD). S-methyl-5'-thioadenosine is bound at residue proline 170.

The protein belongs to the spermidine/spermine synthase family. As to quaternary structure, homodimer or homotetramer.

The protein localises to the cytoplasm. It catalyses the reaction S-adenosyl 3-(methylsulfanyl)propylamine + putrescine = S-methyl-5'-thioadenosine + spermidine + H(+). It participates in amine and polyamine biosynthesis; spermidine biosynthesis; spermidine from putrescine: step 1/1. Its function is as follows. Catalyzes the irreversible transfer of a propylamine group from the amino donor S-adenosylmethioninamine (decarboxy-AdoMet) to putrescine (1,4-diaminobutane) to yield spermidine. The protein is Polyamine aminopropyltransferase of Methanocaldococcus jannaschii (strain ATCC 43067 / DSM 2661 / JAL-1 / JCM 10045 / NBRC 100440) (Methanococcus jannaschii).